A 197-amino-acid polypeptide reads, in one-letter code: RILP-like protein 2 (197 aa).

Residues 1–24 are disordered; that stretch reads MEDHPVREEEDGEEDEGALAKSPL. Residues 8–17 are compositionally biased toward acidic residues; the sequence is EEEDGEEDEG. The 83-residue stretch at 14–96 folds into the RH1 domain; the sequence is EDEGALAKSP…KQEVEGLRKA (83 aa). Residues 69–153 adopt a coiled-coil conformation; that stretch reads VNEGSLAVEE…VQEELQCYRS (85 aa). An RH2 domain is found at 119–184; the sequence is RPRFTLQELR…GNGEKEERTI (66 aa).

The protein belongs to the RILPL family. Homodimer. Interacts with RAC1. Interacts (via N-terminus) with MYO5A, the interaction is required for its role in dendrite formation. Interacts with RAB8A; interaction is dependent on the phosphorylation of RAB8A on 'Thr-72'. Interacts with RAB10 and RAB12; interaction is dependent on the phosphorylation of 'Thr-73' on RAB10 and 'Ser-105' on RAB12.

The protein localises to the cytoplasm. Its subcellular location is the cytosol. It is found in the cytoskeleton. It localises to the microtubule organizing center. The protein resides in the centrosome. The protein localises to the cell projection. Its subcellular location is the cilium. Its function is as follows. Involved in cell shape and neuronal morphogenesis, positively regulating the establishment and maintenance of dendritic spines. Plays a role in cellular protein transport, including protein transport away from primary cilia. May function via activation of RAC1 and PAK1. This is RILP-like protein 2 (Rilpl2) from Mus musculus (Mouse).